A 477-amino-acid polypeptide reads, in one-letter code: Zinc metalloproteinase/disintegrin (477 aa).

The first 19 residues, 1–19, serve as a signal peptide directing secretion; it reads MIQVLLVIICLAVPYQGSS. A propeptide spanning residues 20–186 is cleaved from the precursor; the sequence is IILESGNVND…PIKKASQSNL (167 aa). The region spanning 192–388 is the Peptidase M12B domain; the sequence is RYIELVIVAD…QKPQCILNKP (197 aa). The Ca(2+) site is built by Glu-195 and Asp-279. Intrachain disulfides connect Cys-303/Cys-383, Cys-343/Cys-367, and Cys-345/Cys-350. His-328 provides a ligand contact to Zn(2+). Residue Glu-329 is part of the active site. The Zn(2+) site is built by His-332 and His-338. Residues Cys-383 and Asn-386 each coordinate Ca(2+). The propeptide occupies 389–404; the sequence is LRTDTVSTPVSGNELL. In terms of domain architecture, Disintegrin spans 396 to 477; sequence TPVSGNELLE…AGCPRNPFHA (82 aa). Cystine bridges form between Cys-410–Cys-425, Cys-412–Cys-420, Cys-419–Cys-442, Cys-433–Cys-439, Cys-438–Cys-463, and Cys-451–Cys-470. Positions 455 to 457 match the Cell attachment site motif; sequence RGD.

It belongs to the venom metalloproteinase (M12B) family. P-II subfamily. P-IIa sub-subfamily. Monomer. Zn(2+) is required as a cofactor. As to expression, expressed by the venom gland.

The protein localises to the secreted. Functionally, impairs hemostasis in the envenomed animal. Its function is as follows. Inhibits platelet aggregation induced by ADP, thrombin, platelet-activating factor and collagen. Acts by inhibiting fibrinogen interaction with platelet receptors GPIIb/GPIIIa (ITGA2B/ITGB3). The sequence is that of Zinc metalloproteinase/disintegrin from Gloydius halys (Chinese water mocassin).